Reading from the N-terminus, the 307-residue chain is Ribosomal RNA small subunit methyltransferase H (307 aa).

Residues 33–35 (AGH), D52, L83, D97, and Q104 contribute to the S-adenosyl-L-methionine site.

It belongs to the methyltransferase superfamily. RsmH family.

It is found in the cytoplasm. The catalysed reaction is cytidine(1402) in 16S rRNA + S-adenosyl-L-methionine = N(4)-methylcytidine(1402) in 16S rRNA + S-adenosyl-L-homocysteine + H(+). Functionally, specifically methylates the N4 position of cytidine in position 1402 (C1402) of 16S rRNA. This chain is Ribosomal RNA small subunit methyltransferase H, found in Sulfurovum sp. (strain NBC37-1).